Here is a 652-residue protein sequence, read N- to C-terminus: DNA ligase (652 aa).

NAD(+) is bound by residues 29-33 (DSDYD), 78-79 (SL), and Glu-107. Lys-109 (N6-AMP-lysine intermediate) is an active-site residue. Residues Arg-130, Glu-164, Lys-278, and Lys-302 each coordinate NAD(+). Positions 395, 398, 413, and 418 each coordinate Zn(2+). In terms of domain architecture, BRCT spans 577–652 (NSDAALFGLT…IEDEDWLRQL (76 aa)).

This sequence belongs to the NAD-dependent DNA ligase family. LigA subfamily. It depends on Mg(2+) as a cofactor. Mn(2+) serves as cofactor.

It carries out the reaction NAD(+) + (deoxyribonucleotide)n-3'-hydroxyl + 5'-phospho-(deoxyribonucleotide)m = (deoxyribonucleotide)n+m + AMP + beta-nicotinamide D-nucleotide.. Functionally, DNA ligase that catalyzes the formation of phosphodiester linkages between 5'-phosphoryl and 3'-hydroxyl groups in double-stranded DNA using NAD as a coenzyme and as the energy source for the reaction. It is essential for DNA replication and repair of damaged DNA. This chain is DNA ligase, found in Streptococcus pyogenes serotype M49 (strain NZ131).